The primary structure comprises 515 residues: Maturase K (515 aa).

It belongs to the intron maturase 2 family. MatK subfamily.

The protein localises to the plastid. The protein resides in the chloroplast. Usually encoded in the trnK tRNA gene intron. Probably assists in splicing its own and other chloroplast group II introns. The protein is Maturase K of Trillium luteum (Yellow wakerobin).